Here is a 118-residue protein sequence, read N- to C-terminus: MFQGKCAFFDETVPSALIALWQLHNGEAKFLAEGYENFDYAFSMHLRKHVRLPNYKSVQCRSPWWIAEQVAVSRSKSYVSEPVIHLNVMEPLYVDHRIRSVYLQPLPSTLSFLNGELP.

Interacts with bqt1. The bqt1-bqt2-sad1 complex binds rap1.

The protein resides in the cytoplasm. It is found in the nucleus. It localises to the cytoskeleton. Its subcellular location is the microtubule organizing center. The protein localises to the spindle pole body. The protein resides in the chromosome. It is found in the telomere. In terms of biological role, involved in chromosome segregation. During meiotic prophase, connects telomeres to the spindle pole body by forming a bridge between the telomere protein rap1 and the spindle pole body protein sad1. This Schizosaccharomyces pombe (strain 972 / ATCC 24843) (Fission yeast) protein is Telomere bouquet protein 2 (bqt2).